We begin with the raw amino-acid sequence, 761 residues long: Phosphoribosylformylglycinamidine synthase subunit PurL (761 aa).

The active site involves histidine 49. Residues tyrosine 52 and lysine 92 each contribute to the ATP site. Glutamate 94 contacts Mg(2+). Substrate is bound by residues 95 to 98 (SHNH) and arginine 117. Histidine 96 serves as the catalytic Proton acceptor. Aspartate 118 provides a ligand contact to Mg(2+). Position 241 (glutamine 241) interacts with substrate. Aspartate 269 is a Mg(2+) binding site. 318 to 320 (ESQ) lines the substrate pocket. Asparagine 502 and glycine 539 together coordinate ATP. A Mg(2+)-binding site is contributed by asparagine 540. A substrate-binding site is contributed by serine 542.

The protein belongs to the FGAMS family. As to quaternary structure, monomer. Part of the FGAM synthase complex composed of 1 PurL, 1 PurQ and 2 PurS subunits.

It localises to the cytoplasm. It catalyses the reaction N(2)-formyl-N(1)-(5-phospho-beta-D-ribosyl)glycinamide + L-glutamine + ATP + H2O = 2-formamido-N(1)-(5-O-phospho-beta-D-ribosyl)acetamidine + L-glutamate + ADP + phosphate + H(+). The protein operates within purine metabolism; IMP biosynthesis via de novo pathway; 5-amino-1-(5-phospho-D-ribosyl)imidazole from N(2)-formyl-N(1)-(5-phospho-D-ribosyl)glycinamide: step 1/2. In terms of biological role, part of the phosphoribosylformylglycinamidine synthase complex involved in the purines biosynthetic pathway. Catalyzes the ATP-dependent conversion of formylglycinamide ribonucleotide (FGAR) and glutamine to yield formylglycinamidine ribonucleotide (FGAM) and glutamate. The FGAM synthase complex is composed of three subunits. PurQ produces an ammonia molecule by converting glutamine to glutamate. PurL transfers the ammonia molecule to FGAR to form FGAM in an ATP-dependent manner. PurS interacts with PurQ and PurL and is thought to assist in the transfer of the ammonia molecule from PurQ to PurL. The polypeptide is Phosphoribosylformylglycinamidine synthase subunit PurL (Chlorobium luteolum (strain DSM 273 / BCRC 81028 / 2530) (Pelodictyon luteolum)).